The primary structure comprises 338 residues: Tetraacyldisaccharide 4'-kinase (338 aa).

67-74 provides a ligand contact to ATP; that stretch reads IAGGAGKT.

Belongs to the LpxK family.

The enzyme catalyses a lipid A disaccharide + ATP = a lipid IVA + ADP + H(+). Its pathway is glycolipid biosynthesis; lipid IV(A) biosynthesis; lipid IV(A) from (3R)-3-hydroxytetradecanoyl-[acyl-carrier-protein] and UDP-N-acetyl-alpha-D-glucosamine: step 6/6. Its function is as follows. Transfers the gamma-phosphate of ATP to the 4'-position of a tetraacyldisaccharide 1-phosphate intermediate (termed DS-1-P) to form tetraacyldisaccharide 1,4'-bis-phosphate (lipid IVA). This Acidovorax ebreus (strain TPSY) (Diaphorobacter sp. (strain TPSY)) protein is Tetraacyldisaccharide 4'-kinase.